A 692-amino-acid polypeptide reads, in one-letter code: 5-taurinomethyluridine-[tRNA] synthase subunit MTO1, mitochondrial (692 aa).

A mitochondrion-targeting transit peptide spans 1–25; that stretch reads MFYLRGCGRWVAASFTKQQFPLVRL. FAD-binding positions include 43 to 48, valine 155, serine 218, and glutamine 407; that span reads GGGHAG. Lysine 508 carries the N6-methyllysine modification. Residues 669–692 form a disordered region; sequence AAMNESPKTDQCLRNADRLQERQL. Residues 683-692 are compositionally biased toward basic and acidic residues; that stretch reads NADRLQERQL.

This sequence belongs to the MnmG family. As to quaternary structure, homodimer; forms a dimer in the presence of potassium. Interacts with GTPBP3; forms the GTPBP3-MTO1 complex composed of homodimers of GTPBP3 and MTO1. It depends on FAD as a cofactor.

The protein localises to the mitochondrion. The catalysed reaction is 5,10-methylenetetrahydrofolate + uridine(34) in tRNA + taurine + GTP + A + H2O = 5-taurinomethyluridine(34) in tRNA + 7,8-dihydrofolate + GDP + AH2 + phosphate + H(+). Its function is as follows. Component of the GTPBP3-MTO1 complex that catalyzes the 5-taurinomethyluridine (taum(5)U) modification at the 34th wobble position (U34) of mitochondrial tRNAs (mt-tRNAs), which plays a role in mt-tRNA decoding and mitochondrial translation. Taum(5)U formation on mammalian mt-tRNA requires the presence of both GTPBP3-mediated GTPase activity and MTO1 catalytic activity. In Macaca fascicularis (Crab-eating macaque), this protein is 5-taurinomethyluridine-[tRNA] synthase subunit MTO1, mitochondrial (MTO1).